The primary structure comprises 89 residues: Putative RING finger protein 121R (89 aa).

The segment at 45 to 78 (CPICLIAKVNTVLECTHVLCSNCVKKINVCPICR) adopts an RING-type zinc-finger fold.

The protein is Putative RING finger protein 121R of Invertebrate iridescent virus 6 (IIV-6).